A 655-amino-acid polypeptide reads, in one-letter code: Macrolide export ATP-binding/permease protein MacB (655 aa).

One can recognise an ABC transporter domain in the interval 6–244; sequence IVLRGLRREY…VAAPTAAAAQ (239 aa). Residue 42–49 coordinates ATP; that stretch reads GASGSGKS. The next 4 helical transmembrane spans lie at 279-299, 528-548, 579-599, and 618-638; these read FLTM…VAVG, LTLM…IGVM, FLIE…AVAY, and AGSI…FGYL.

It belongs to the ABC transporter superfamily. Macrolide exporter (TC 3.A.1.122) family. As to quaternary structure, homodimer.

It is found in the cell inner membrane. Functionally, non-canonical ABC transporter that contains transmembrane domains (TMD), which form a pore in the inner membrane, and an ATP-binding domain (NBD), which is responsible for energy generation. Confers resistance against macrolides. The chain is Macrolide export ATP-binding/permease protein MacB from Rhodopseudomonas palustris (strain BisB18).